The chain runs to 189 residues: ATP synthase subunit b (189 aa).

The chain crosses the membrane as a helical span at residues proline 38 to leucine 58.

The protein belongs to the ATPase B chain family. In terms of assembly, F-type ATPases have 2 components, F(1) - the catalytic core - and F(0) - the membrane proton channel. F(1) has five subunits: alpha(3), beta(3), gamma(1), delta(1), epsilon(1). F(0) has three main subunits: a(1), b(2) and c(10-14). The alpha and beta chains form an alternating ring which encloses part of the gamma chain. F(1) is attached to F(0) by a central stalk formed by the gamma and epsilon chains, while a peripheral stalk is formed by the delta and b chains.

Its subcellular location is the cell membrane. F(1)F(0) ATP synthase produces ATP from ADP in the presence of a proton or sodium gradient. F-type ATPases consist of two structural domains, F(1) containing the extramembraneous catalytic core and F(0) containing the membrane proton channel, linked together by a central stalk and a peripheral stalk. During catalysis, ATP synthesis in the catalytic domain of F(1) is coupled via a rotary mechanism of the central stalk subunits to proton translocation. In terms of biological role, component of the F(0) channel, it forms part of the peripheral stalk, linking F(1) to F(0). This Mycoplasmopsis agalactiae (strain NCTC 10123 / CIP 59.7 / PG2) (Mycoplasma agalactiae) protein is ATP synthase subunit b.